We begin with the raw amino-acid sequence, 124 residues long: Protein BEX3 (124 aa).

The interval 1 to 56 is disordered; the sequence is MANVHQENEEMEQPLQNGQEDRPVGGGEGHQPAANNNNNNHNHNHNHHRRGQARRL. A compositionally biased stretch (basic residues) spans 42-53; it reads NHNHNHHRRGQA. The tract at residues 81 to 106 is interaction with p75NTR/NGFR; sequence EMFMEEMREIRRKLRELQLRNCLRIL. Residues 81-124 are interaction with 14-3-3 epsilon; that stretch reads EMFMEEMREIRRKLRELQLRNCLRILMGELSNHHDHHDEFCLMP. The Nuclear export signal signature appears at 90–100; sequence IRRKLRELQLR. Residues 113-117 form a his cluster region; it reads HHDHH. Position 121 (C121) interacts with Zn(2+).

The protein belongs to the BEX family. Self-associates. Binds to the DEATH domain of p75NTR/NGFR. Interacts with 14-3-3 epsilon (YWHAE). Interacts with DIABLO/SMAC. In terms of processing, ubiquitinated. Degraded by the proteasome. In terms of tissue distribution, widely expressed.

It is found in the nucleus. The protein localises to the cytoplasm. The protein resides in the cytosol. In terms of biological role, may be a signaling adapter molecule involved in NGFR/p75NTR-mediated apoptosis induced by NGF. Plays a role in zinc-triggered neuronal death. In absence of reductive stress, acts as a pseudosubstrate for the CRL2(FEM1B) complex: associates with FEM1B via zinc, thereby preventing association between FEM1B and its substrates. The chain is Protein BEX3 from Mus musculus (Mouse).